The following is a 173-amino-acid chain: MNDLRYPIGQFTYKRPITEEMIDTWIQEIEDLPNELTKAIKDLDQKQLDTPYRVGGWTVRQVVHHVVDSHMNSYIRFKLALTEKNPTIKPYKEEKWAELPDSKLPVDVSLVMLDSLHKRWVNLLYSLELEDLEKTFNHPDTGETKLAAAIGLYAWHGRHHTAHITSLRKRLNW.

Positions 65, 156, and 160 each coordinate Zn(2+).

Belongs to the metal hydrolase YfiT family. As to quaternary structure, homodimer. It depends on Zn(2+) as a cofactor.

Its subcellular location is the cytoplasm. In terms of biological role, possible metal-dependent hydrolase. The polypeptide is Putative metal-dependent hydrolase BCE33L2441 (Bacillus cereus (strain ZK / E33L)).